Here is a 366-residue protein sequence, read N- to C-terminus: Peptide chain release factor 2 (366 aa).

The residue at position 253 (glutamine 253) is an N5-methylglutamine.

The protein belongs to the prokaryotic/mitochondrial release factor family. Post-translationally, methylated by PrmC. Methylation increases the termination efficiency of RF2.

It localises to the cytoplasm. Peptide chain release factor 2 directs the termination of translation in response to the peptide chain termination codons UGA and UAA. This is Peptide chain release factor 2 from Yersinia pestis.